A 622-amino-acid polypeptide reads, in one-letter code: DNA mismatch repair protein MutL (622 aa).

Belongs to the DNA mismatch repair MutL/HexB family.

This protein is involved in the repair of mismatches in DNA. It is required for dam-dependent methyl-directed DNA mismatch repair. May act as a 'molecular matchmaker', a protein that promotes the formation of a stable complex between two or more DNA-binding proteins in an ATP-dependent manner without itself being part of a final effector complex. The protein is DNA mismatch repair protein MutL of Prosthecochloris aestuarii (strain DSM 271 / SK 413).